Reading from the N-terminus, the 637-residue chain is Biosynthetic arginine decarboxylase (637 aa).

K110 carries the N6-(pyridoxal phosphate)lysine modification. 290–300 (IDVGGGLGVDY) contributes to the substrate binding site.

This sequence belongs to the Orn/Lys/Arg decarboxylase class-II family. SpeA subfamily. The cofactor is Mg(2+). Requires pyridoxal 5'-phosphate as cofactor.

It carries out the reaction L-arginine + H(+) = agmatine + CO2. Functionally, catalyzes the biosynthesis of agmatine from arginine. The polypeptide is Biosynthetic arginine decarboxylase (Pseudomonas putida (strain ATCC 47054 / DSM 6125 / CFBP 8728 / NCIMB 11950 / KT2440)).